A 299-amino-acid chain; its full sequence is Glycine--tRNA ligase alpha subunit (299 aa).

Belongs to the class-II aminoacyl-tRNA synthetase family. In terms of assembly, tetramer of two alpha and two beta subunits.

It is found in the cytoplasm. It carries out the reaction tRNA(Gly) + glycine + ATP = glycyl-tRNA(Gly) + AMP + diphosphate. This chain is Glycine--tRNA ligase alpha subunit, found in Pediococcus pentosaceus (strain ATCC 25745 / CCUG 21536 / LMG 10740 / 183-1w).